The primary structure comprises 663 residues: Probable methylenetetrahydrofolate reductase (NADPH) (663 aa).

E76 (proton donor/acceptor) is an active-site residue. NAD(+)-binding positions include 76-81 (EFFPPR) and 107-108 (TW). T107 is subject to Phosphothreonine. Residues 107–108 (TW), H141, 171–173 (RGD), 187–188 (RA), Y210, 214–217 (HPQA), D223, and K230 each bind FAD. D173 contacts substrate. The substrate site is built by Q241, Y334, and R338. The residue at position 408 (S408) is a Phosphoserine. T465 bears the Phosphothreonine mark. S-adenosyl-L-methionine contacts are provided by residues 477 to 480 (QPET), 497 to 501 (TVNSQ), T578, and T591.

Belongs to the methylenetetrahydrofolate reductase family. The cofactor is FAD.

The enzyme catalyses (6S)-5-methyl-5,6,7,8-tetrahydrofolate + NADP(+) = (6R)-5,10-methylene-5,6,7,8-tetrahydrofolate + NADPH + H(+). It functions in the pathway one-carbon metabolism; tetrahydrofolate interconversion. The chain is Probable methylenetetrahydrofolate reductase (NADPH) from Caenorhabditis elegans.